The chain runs to 84 residues: U21-theraphotoxin-Cg1c (84 aa).

Residues Met-1–Ala-21 form the signal peptide. A propeptide spanning residues Glu-22–Arg-47 is cleaved from the precursor. 3 disulfide bridges follow: Cys-49–Cys-63, Cys-56–Cys-68, and Cys-62–Cys-76.

This sequence belongs to the neurotoxin 10 (Hwtx-1) family. 05 (F4a) subfamily. In terms of tissue distribution, expressed by the venom gland.

The protein localises to the secreted. In terms of biological role, probable ion channel inhibitor. The polypeptide is U21-theraphotoxin-Cg1c (Chilobrachys guangxiensis (Chinese earth tiger tarantula)).